The following is a 181-amino-acid chain: UPF0302 protein lin2035 (181 aa).

This sequence belongs to the UPF0302 family.

This is UPF0302 protein lin2035 from Listeria innocua serovar 6a (strain ATCC BAA-680 / CLIP 11262).